Reading from the N-terminus, the 1434-residue chain is DNA-directed RNA polymerase subunit beta (1434 aa).

The protein belongs to the RNA polymerase beta chain family. In terms of assembly, the RNAP catalytic core consists of 2 alpha, 1 beta, 1 beta' and 1 omega subunit. When a sigma factor is associated with the core the holoenzyme is formed, which can initiate transcription.

The catalysed reaction is RNA(n) + a ribonucleoside 5'-triphosphate = RNA(n+1) + diphosphate. DNA-dependent RNA polymerase catalyzes the transcription of DNA into RNA using the four ribonucleoside triphosphates as substrates. This chain is DNA-directed RNA polymerase subunit beta, found in Ureaplasma parvum serovar 3 (strain ATCC 27815 / 27 / NCTC 11736).